The following is a 103-amino-acid chain: Large ribosomal subunit protein uL24 (103 aa).

This sequence belongs to the universal ribosomal protein uL24 family. In terms of assembly, part of the 50S ribosomal subunit.

One of two assembly initiator proteins, it binds directly to the 5'-end of the 23S rRNA, where it nucleates assembly of the 50S subunit. Functionally, one of the proteins that surrounds the polypeptide exit tunnel on the outside of the subunit. The chain is Large ribosomal subunit protein uL24 from Exiguobacterium sibiricum (strain DSM 17290 / CCUG 55495 / CIP 109462 / JCM 13490 / 255-15).